The sequence spans 536 residues: uncharacterized protein (536 aa).

The Cytoplasmic segment spans residues 1–8 (MVSIKRYE). Residues 9 to 29 (IISFVIAAFFFLSGLSMWIAF) traverse the membrane as a helical segment. Over 30 to 502 (WPIFNSELRS…VWLGVIIVPR (473 aa)) the chain is Extracellular. N-linked (GlcNAc...) asparagine glycans are attached at residues N73, N236, N363, and N376. Residues 503-523 (IIEYLKFVLIFISICILTTLL) form a helical membrane-spanning segment. At 524-536 (VIRVRVKGTVSVV) the chain is on the cytoplasmic side.

Belongs to the CD36 family.

Its subcellular location is the membrane. This is an uncharacterized protein from Caenorhabditis elegans.